Consider the following 450-residue polypeptide: Cell division cycle 20.5, cofactor of APC complex (450 aa).

7 WD repeats span residues 129–166 (ADDF…TYKL), 171–210 (EEEG…QVRT), 214–251 (GHES…SIVE), 255–294 (GHTE…SSNP), 304–346 (EHTA…CLNS), 348–389 (ETGS…KMAE), and 392–431 (GHTS…PKTT).

It belongs to the WD repeat CDC20/Fizzy family. In terms of assembly, the APC/C is composed of at least 11 subunits that stay tightly associated throughout the cell cycle. Binds to GIG1 and PYM. Part of the mitotic checkpoint complex (MCC); interacts with MAD2 and BUB1.

The protein localises to the nucleus. It functions in the pathway protein modification; protein ubiquitination. Its function is as follows. Component of the anaphase promoting complex/cyclosome (APC/C), a cell cycle-regulated E3 ubiquitin-protein ligase complex that controls progression through mitosis and the G1 phase of the cell cycle. In Arabidopsis thaliana (Mouse-ear cress), this protein is Cell division cycle 20.5, cofactor of APC complex (CDC20-5).